We begin with the raw amino-acid sequence, 723 residues long: ABC transporter F family member 4 (723 aa).

The disordered stretch occupies residues 1–117; sequence MGKKKSDESA…KEQKKREAKE (117 aa). The segment covering 18-31 has biased composition (basic and acidic residues); the sequence is SGKDASKDSKKEKL. Positions 50–65 are enriched in polar residues; the sequence is GSSSRTKAAPKSTSYT. Acidic residues predominate over residues 72-84; the sequence is PSDEEDDGESDEE. Residues 95 to 117 are compositionally biased toward basic and acidic residues; that stretch reads KSEQRHLEISVTDKEQKKREAKE. The ABC transporter 1 domain occupies 163 to 423; sequence ITIESFSVSA…EMNKKFDVYD (261 aa). 195 to 202 contacts ATP; it reads GPNGMGKS. 2 disordered regions span residues 256-275 and 427-472; these read LQKS…DDDD and KAAK…APEA. Acidic residues predominate over residues 266–275; it reads ENVDGEDDDD. A compositionally biased stretch (basic and acidic residues) spans 437-446; it reads QQEKVKDRAK. The ABC transporter 2 domain maps to 496 to 721; that stretch reads LQLIEVSFSY…DLQREIKAEV (226 aa). 530–537 serves as a coordination point for ATP; it reads GPNGAGKS.

Belongs to the ABC transporter superfamily. ABCF family. EF3 (TC 3.A.1.121) subfamily.

The chain is ABC transporter F family member 4 (ABCF4) from Arabidopsis thaliana (Mouse-ear cress).